The primary structure comprises 286 residues: ATP synthase gamma chain (286 aa).

It belongs to the ATPase gamma chain family. As to quaternary structure, F-type ATPases have 2 components, CF(1) - the catalytic core - and CF(0) - the membrane proton channel. CF(1) has five subunits: alpha(3), beta(3), gamma(1), delta(1), epsilon(1). CF(0) has three main subunits: a, b and c.

It localises to the cell inner membrane. In terms of biological role, produces ATP from ADP in the presence of a proton gradient across the membrane. The gamma chain is believed to be important in regulating ATPase activity and the flow of protons through the CF(0) complex. The sequence is that of ATP synthase gamma chain from Shewanella putrefaciens (strain CN-32 / ATCC BAA-453).